Reading from the N-terminus, the 88-residue chain is Apolipoprotein C-I (88 aa).

Positions 1–26 (MRLFLSLPVLVVVLAMVLEGPAPAQA) are cleaved as a signal peptide.

Belongs to the apolipoprotein C1 family.

It localises to the secreted. Functionally, inhibitor of lipoprotein binding to the low density lipoprotein (LDL) receptor, LDL receptor-related protein, and very low density lipoprotein (VLDL) receptor. Associates with high density lipoproteins (HDL) and the triacylglycerol-rich lipoproteins in the plasma and makes up about 10% of the protein of the VLDL and 2% of that of HDL. Appears to interfere directly with fatty acid uptake and is also the major plasma inhibitor of cholesteryl ester transfer protein (CETP). Binds free fatty acids and reduces their intracellular esterification. Modulates the interaction of APOE with beta-migrating VLDL and inhibits binding of beta-VLDL to the LDL receptor-related protein. The polypeptide is Apolipoprotein C-I (APOC1) (Ailurus fulgens (Himalayan red panda)).